Consider the following 577-residue polypeptide: Isocitrate dehydrogenase kinase/phosphatase (577 aa).

ATP-binding positions include 318–324 (APGVRGM) and Lys-339. Residue Asp-374 is part of the active site.

It belongs to the AceK family.

It localises to the cytoplasm. The catalysed reaction is L-seryl-[isocitrate dehydrogenase] + ATP = O-phospho-L-seryl-[isocitrate dehydrogenase] + ADP + H(+). In terms of biological role, bifunctional enzyme which can phosphorylate or dephosphorylate isocitrate dehydrogenase (IDH) on a specific serine residue. This is a regulatory mechanism which enables bacteria to bypass the Krebs cycle via the glyoxylate shunt in response to the source of carbon. When bacteria are grown on glucose, IDH is fully active and unphosphorylated, but when grown on acetate or ethanol, the activity of IDH declines drastically concomitant with its phosphorylation. This chain is Isocitrate dehydrogenase kinase/phosphatase, found in Pseudomonas aeruginosa (strain UCBPP-PA14).